The following is a 101-amino-acid chain: Protein S100-A3 (101 aa).

2 consecutive EF-hand domains span residues 12–47 (IVCT…TWTP) and 50–85 (FREC…LCLY). Ca(2+) is bound at residue lysine 26. Cysteine 30 and cysteine 68 form a disulfide bridge. The residue at position 51 (arginine 51) is a Citrulline; by PAD3. Positions 63, 65, 67, 69, and 74 each coordinate Ca(2+). Residues cysteine 83, cysteine 86, histidine 87, and cysteine 93 each contribute to the Zn(2+) site.

It belongs to the S-100 family. In terms of assembly, homodimer and homotetramer for the citrullinated form. Post-translationally, more than half of the arginine residues undergo citrullination by PAD1 and PAD2. Arg-51 is specifically citrullinated by PAD3 and promotes tetramerization. In terms of tissue distribution, skin specific, specifically expressed in cuticle of pelage follicle.

It is found in the cytoplasm. Binds both calcium and zinc. May be involved in calcium-dependent cuticle cell differentiation, hair shaft and hair cuticular barrier formation. This chain is Protein S100-A3 (S100a3), found in Mus musculus (Mouse).